A 91-amino-acid polypeptide reads, in one-letter code: Large ribosomal subunit protein bL31B (91 aa).

Belongs to the bacterial ribosomal protein bL31 family. Type B subfamily. As to quaternary structure, part of the 50S ribosomal subunit.

This chain is Large ribosomal subunit protein bL31B, found in Neisseria meningitidis serogroup A / serotype 4A (strain DSM 15465 / Z2491).